The chain runs to 361 residues: Phosphoserine aminotransferase (361 aa).

R43 provides a ligand contact to L-glutamate. Pyridoxal 5'-phosphate is bound by residues 77 to 78, W103, T153, D173, and Q196; that span reads AS. K197 carries the N6-(pyridoxal phosphate)lysine modification. A pyridoxal 5'-phosphate-binding site is contributed by 238 to 239; sequence NT.

The protein belongs to the class-V pyridoxal-phosphate-dependent aminotransferase family. SerC subfamily. As to quaternary structure, homodimer. Pyridoxal 5'-phosphate serves as cofactor.

Its subcellular location is the cytoplasm. It carries out the reaction O-phospho-L-serine + 2-oxoglutarate = 3-phosphooxypyruvate + L-glutamate. The catalysed reaction is 4-(phosphooxy)-L-threonine + 2-oxoglutarate = (R)-3-hydroxy-2-oxo-4-phosphooxybutanoate + L-glutamate. The protein operates within amino-acid biosynthesis; L-serine biosynthesis; L-serine from 3-phospho-D-glycerate: step 2/3. It functions in the pathway cofactor biosynthesis; pyridoxine 5'-phosphate biosynthesis; pyridoxine 5'-phosphate from D-erythrose 4-phosphate: step 3/5. Catalyzes the reversible conversion of 3-phosphohydroxypyruvate to phosphoserine and of 3-hydroxy-2-oxo-4-phosphonooxybutanoate to phosphohydroxythreonine. The sequence is that of Phosphoserine aminotransferase from Ectopseudomonas mendocina (strain ymp) (Pseudomonas mendocina).